Consider the following 881-residue polypeptide: Tyrosine-protein kinase receptor TYRO3 (881 aa).

Residues 1–28 (MVNPGPPGLIAGLLLAALSLSSVDGTKA) form the signal peptide. Ig-like C2-type domains are found at residues 29 to 114 (LGFV…KSVS) and 125 to 206 (PYFT…AIVE). The Extracellular portion of the chain corresponds to 29–414 (LGFVGHGYNM…QRHPHTRMSW (386 aa)). Residues N37 and N49 are each glycosylated (N-linked (GlcNAc...) asparagine). C50 and C103 are joined by a disulfide. N143 carries an N-linked (GlcNAc...) asparagine glycan. C146 and C189 form a disulfide bridge. Fibronectin type-III domains are found at residues 213–306 (PPFN…TKEK) and 311–401 (IPQN…SKEE). N-linked (GlcNAc...) asparagine glycosylation is found at N216, N279, N351, and N365. A helical transmembrane segment spans residues 415 to 435 (VPMVLGILTALVTVVAMTLIF). At 436 to 881 (LRKGRKETRF…MQEEQVVITL (446 aa)) the chain is on the cytoplasmic side. One can recognise a Protein kinase domain in the interval 503 to 774 (FTLGRTLGKG…VDLKRRLEAI (272 aa)). Residues 509–517 (LGKGEFGSV) and K535 each bind ATP. D640 functions as the Proton acceptor in the catalytic mechanism. Y671 carries the post-translational modification Phosphotyrosine; by autocatalysis. Residues 846–881 (EWSSSAQNGEARGLLHEEEEEEEEEEMQEEQVVITL) are disordered. The span at 862 to 874 (EEEEEEEEEEMQE) shows a compositional bias: acidic residues.

This sequence belongs to the protein kinase superfamily. Tyr protein kinase family. AXL/UFO subfamily. Tyrosine phosphorylated upon receptor stimulation.

It localises to the cell membrane. The enzyme catalyses L-tyrosyl-[protein] + ATP = O-phospho-L-tyrosyl-[protein] + ADP + H(+). Its function is as follows. May be involved in cell adhesion processes, particularly in the central nervous system. In Xenopus tropicalis (Western clawed frog), this protein is Tyrosine-protein kinase receptor TYRO3 (tyro3).